Reading from the N-terminus, the 325-residue chain is Mitochondrial amidoxime-reducing component 1 (325 aa).

Over 1 to 16 the chain is Mitochondrial matrix; the sequence is MDLKEAFATIFDQNRK. Residues 17-36 form a helical; Signal-anchor for type II membrane protein membrane-spanning segment; sequence VALYAAGTTVAVLGLGLVFK. The Cytoplasmic portion of the chain corresponds to 37–325; sequence YMRREEKLTR…VGEPVYKITY (289 aa). Lys59, Ser60, and Arg84 together coordinate Mo-molybdopterin. An MOSC N-terminal region region spans residues 85–175; sequence HWLVITEDGH…ADKPVRLVHY (91 aa). An MOSC domain is found at 179–323; that stretch reads LKPQRPHEKE…LHVGEPVYKI (145 aa). Mo-molybdopterin contacts are provided by Arg230, Arg264, Cys265, and Tyr305.

Mo-molybdopterin is required as a cofactor.

It localises to the mitochondrion outer membrane. The protein localises to the membrane. The catalysed reaction is N(omega)-hydroxy-L-arginine + 2 Fe(II)-[cytochrome b5] + 2 H(+) = L-arginine + 2 Fe(III)-[cytochrome b5] + H2O. Functionally, catalyzes the reduction of N-oxygenated molecules, acting as a counterpart of cytochrome P450 and flavin-containing monooxygenases in metabolic cycles. As a component of prodrug-converting system, reduces a multitude of N-hydroxylated prodrugs particularly amidoximes, leading to increased drug bioavailability. May be involved in mitochondrial N(omega)-hydroxy-L-arginine (NOHA) reduction, regulating endogenous nitric oxide levels and biosynthesis. Postulated to cleave the N-OH bond of N-hydroxylated substrates in concert with electron transfer from NADH to cytochrome b5 reductase then to cytochrome b5, the ultimate electron donor that primes the active site for substrate reduction. The chain is Mitochondrial amidoxime-reducing component 1 (mtarc1) from Danio rerio (Zebrafish).